Consider the following 799-residue polypeptide: Ribonucleoside-diphosphate reductase large subunit (799 aa).

Substrate is bound by residues Thr192, 207-208, Gly238, 408-412, and 612-616; these read SC, NLCAE, and PTAGT. A disulfide bond links Cys208 and Cys424. Asn408 (proton acceptor) is an active-site residue. Residue Cys410 is the Cysteine radical intermediate of the active site. The active-site Proton acceptor is the Glu412. The disordered stretch occupies residues 765–799; sequence PDSGDGVGGYKGGDEEPRSPEHAQCESPDRCLSCQ. Over residues 776 to 793 the composition is skewed to basic and acidic residues; it reads GGDEEPRSPEHAQCESPD.

This sequence belongs to the ribonucleoside diphosphate reductase large chain family. Heterotetramer composed of a homodimer of the large subunit (R1) and a homodimer of the small subunit (R2). Larger multisubunit protein complex are also active, composed of (R1)n(R2)n.

It catalyses the reaction a 2'-deoxyribonucleoside 5'-diphosphate + [thioredoxin]-disulfide + H2O = a ribonucleoside 5'-diphosphate + [thioredoxin]-dithiol. Ribonucleoside-diphosphate reductase holoenzyme provides the precursors necessary for viral DNA synthesis. Allows virus growth in non-dividing cells, as well as reactivation from latency in infected hosts. Catalyzes the biosynthesis of deoxyribonucleotides from the corresponding ribonucleotides. In Equine herpesvirus 2 (strain 86/87) (EHV-2), this protein is Ribonucleoside-diphosphate reductase large subunit.